The primary structure comprises 72 residues: Translation initiation factor IF-1 (72 aa).

One can recognise an S1-like domain in the interval 2-72 (AKEDVIEVEG…TRGRITYRYK (71 aa)). Phosphotyrosine is present on Tyr60.

It belongs to the IF-1 family. As to quaternary structure, component of the 30S ribosomal translation pre-initiation complex which assembles on the 30S ribosome in the order IF-2 and IF-3, IF-1 and N-formylmethionyl-tRNA(fMet); mRNA recruitment can occur at any time during PIC assembly.

Its subcellular location is the cytoplasm. Functionally, one of the essential components for the initiation of protein synthesis. Stabilizes the binding of IF-2 and IF-3 on the 30S subunit to which N-formylmethionyl-tRNA(fMet) subsequently binds. Helps modulate mRNA selection, yielding the 30S pre-initiation complex (PIC). Upon addition of the 50S ribosomal subunit IF-1, IF-2 and IF-3 are released leaving the mature 70S translation initiation complex. The protein is Translation initiation factor IF-1 of Halalkalibacterium halodurans (strain ATCC BAA-125 / DSM 18197 / FERM 7344 / JCM 9153 / C-125) (Bacillus halodurans).